The following is a 440-amino-acid chain: MPMSTSCPHQPYCEMREQTDMRFISHLTRNTFAIILAGGRGTRLKQLTDFRSKPAVPFAGKFRILDFTLSNCVNSGIRKIGVATQYKAHSLIRHIQRGWSFLDGRFDEFIQLLPAQQQIDETQWYQGTADAVYQNLHFLRRYQPDHILVVAGDHIYKMDYGRMLAHHVKHHADMTVACIDVPLDEAREFGVMGVDEQDRVIDFVEKPQNPPAIPGQPDRALASMGIYIFNTKFLFEQLERDAMTKGSNRDFGKDIIPYIVPRYRVFAHRFADSCVGSDNHRPYWRDVGTIDAYWEANMEMTKVTPELNVYDRDWPIWTYQEQIPPAKFVFDDEDRRGTAVDSLIAGGCIISGASVKRSLLFSSVNVHSWASVEDSVVLPDVDIGRHAVLKRCVIDKHCRIPEGMVIGVDPEEDRKRFHVSPKGITLVTAEMLGQGAAEGR.

Residues Y125, G190, 205-206, and S223 contribute to the alpha-D-glucose 1-phosphate site; that span reads EK.

This sequence belongs to the bacterial/plant glucose-1-phosphate adenylyltransferase family. Homotetramer.

The catalysed reaction is alpha-D-glucose 1-phosphate + ATP + H(+) = ADP-alpha-D-glucose + diphosphate. It participates in glycan biosynthesis; glycogen biosynthesis. Functionally, involved in the biosynthesis of ADP-glucose, a building block required for the elongation reactions to produce glycogen. Catalyzes the reaction between ATP and alpha-D-glucose 1-phosphate (G1P) to produce pyrophosphate and ADP-Glc. This Dechloromonas aromatica (strain RCB) protein is Glucose-1-phosphate adenylyltransferase.